We begin with the raw amino-acid sequence, 503 residues long: Probable cytosol aminopeptidase (503 aa).

2 residues coordinate Mn(2+): Lys-270 and Asp-275. The active site involves Lys-282. Mn(2+) is bound by residues Asp-293, Asp-352, and Glu-354. Residue Arg-356 is part of the active site.

The protein belongs to the peptidase M17 family. Mn(2+) serves as cofactor.

The protein localises to the cytoplasm. It carries out the reaction Release of an N-terminal amino acid, Xaa-|-Yaa-, in which Xaa is preferably Leu, but may be other amino acids including Pro although not Arg or Lys, and Yaa may be Pro. Amino acid amides and methyl esters are also readily hydrolyzed, but rates on arylamides are exceedingly low.. The catalysed reaction is Release of an N-terminal amino acid, preferentially leucine, but not glutamic or aspartic acids.. In terms of biological role, presumably involved in the processing and regular turnover of intracellular proteins. Catalyzes the removal of unsubstituted N-terminal amino acids from various peptides. The sequence is that of Probable cytosol aminopeptidase from Edwardsiella ictaluri (strain 93-146).